We begin with the raw amino-acid sequence, 30 residues long: Cyclotide mela-5 (30 aa).

The cyclopeptide (Gly-Asp) cross-link spans 1-30; the sequence is GSAIACGESCFKFKCYTPGCSCSYPICKKD. 3 disulfide bridges follow: Cys-6–Cys-20, Cys-10–Cys-22, and Cys-15–Cys-27.

This is a cyclic peptide. In terms of processing, contains 3 disulfide bonds.

Probably participates in a plant defense mechanism (Potential). Binds to and induces leakage in phospholipd membranes, particularly ones containing 1-palmitoyl-2-oleophosphatidylethanolamine (POPE). This Melicytus latifolius (Norfolk Island mahoe) protein is Cyclotide mela-5.